The sequence spans 536 residues: 2,3-bisphosphoglycerate-independent phosphoglycerate mutase (536 aa).

Residues D19 and S69 each contribute to the Mn(2+) site. S69 (phosphoserine intermediate) is an active-site residue. Residues H130, 160–161 (RD), R192, R198, 262–265 (RPDR), and K335 each bind substrate. D402, H406, D443, H444, and H461 together coordinate Mn(2+).

The protein belongs to the BPG-independent phosphoglycerate mutase family. As to quaternary structure, monomer. It depends on Mn(2+) as a cofactor.

It catalyses the reaction (2R)-2-phosphoglycerate = (2R)-3-phosphoglycerate. Its pathway is carbohydrate degradation; glycolysis; pyruvate from D-glyceraldehyde 3-phosphate: step 3/5. Catalyzes the interconversion of 2-phosphoglycerate and 3-phosphoglycerate. This is 2,3-bisphosphoglycerate-independent phosphoglycerate mutase from Gloeobacter violaceus (strain ATCC 29082 / PCC 7421).